The primary structure comprises 151 residues: Ubiquitin-conjugating enzyme E2 N (151 aa).

Residues 3-149 (SLPRRIIKET…AREWTQKYAV (147 aa)) enclose the UBC core domain. Residue cysteine 87 is the Glycyl thioester intermediate of the active site.

Belongs to the ubiquitin-conjugating enzyme family.

The enzyme catalyses S-ubiquitinyl-[E1 ubiquitin-activating enzyme]-L-cysteine + [E2 ubiquitin-conjugating enzyme]-L-cysteine = [E1 ubiquitin-activating enzyme]-L-cysteine + S-ubiquitinyl-[E2 ubiquitin-conjugating enzyme]-L-cysteine.. It participates in protein modification; protein ubiquitination. Its function is as follows. Catalyzes the covalent attachment of ubiquitin to other proteins. The sequence is that of Ubiquitin-conjugating enzyme E2 N (ben) from Drosophila melanogaster (Fruit fly).